The sequence spans 1049 residues: Protein phosphatase Slingshot homolog 1 (1049 aa).

Residues methionine 1–proline 12 show a composition bias toward polar residues. The interval methionine 1–serine 28 is disordered. Residue alanine 2 is modified to N-acetylalanine. A compositionally biased stretch (low complexity) spans serine 13–glutamate 25. Serine 37 and serine 57 each carry phosphoserine. Residues glutamate 249–glycine 304 enclose the DEK-C domain. The Tyrosine-protein phosphatase domain maps to lysine 308 to alanine 449. The Phosphocysteine intermediate role is filled by cysteine 393. Residues lysine 456–alanine 499 form a disordered region. The span at tryptophan 458–glutamine 468 shows a compositional bias: polar residues. A Phosphoserine modification is found at serine 515. Disordered stretches follow at residues alanine 544–glutamine 603, histidine 693–lysine 787, histidine 825–proline 899, and proline 923–threonine 955. Positions cysteine 564–glutamate 573 are enriched in basic and acidic residues. Serine 576 bears the Phosphoserine mark. A compositionally biased stretch (low complexity) spans glycine 731 to glutamate 742. Positions valine 772–lysine 787 are enriched in basic and acidic residues. Residue serine 897 is modified to Phosphoserine. The interaction with YWHAG stretch occupies residues serine 897–serine 1049. Positions serine 925–serine 943 are enriched in low complexity. Serine 978 bears the Phosphoserine mark. The tract at residues threonine 989–serine 1049 is disordered. The segment covering valine 1001–serine 1013 has biased composition (polar residues).

It belongs to the protein-tyrosine phosphatase family. In terms of assembly, interacts with actin and this stimulates phosphatase activity. Also interacts with LIMK1 and with the 14-3-3 proteins YWHAB, YWHAG, YWHAQ, and YWHAZ. Interaction with 14-3-3 proteins inhibits phosphatase activity and also blocks recruitment to lamellipodia and stimulation by actin. In terms of processing, phosphorylated. Inhibitory phosphorylation by PAK4 promotes binding to YWHAZ. Phosphorylation at Ser-978 is decreased by stimuli which promote actin reorganization and lamellipodia formation. Can be dephosphorylated and activated by PPP3CA/calcineurin A. Phosphorylation decreases immediately prior to telophase.

It localises to the cytoplasm. The protein resides in the cytoskeleton. Its subcellular location is the cell projection. It is found in the lamellipodium. The protein localises to the cleavage furrow. It localises to the midbody. The catalysed reaction is O-phospho-L-tyrosyl-[protein] + H2O = L-tyrosyl-[protein] + phosphate. It carries out the reaction O-phospho-L-seryl-[protein] + H2O = L-seryl-[protein] + phosphate. The enzyme catalyses O-phospho-L-threonyl-[protein] + H2O = L-threonyl-[protein] + phosphate. In terms of biological role, protein phosphatase which regulates actin filament dynamics. Dephosphorylates and activates the actin binding/depolymerizing factor cofilin, which subsequently binds to actin filaments and stimulates their disassembly. Inhibitory phosphorylation of cofilin is mediated by LIMK1, which may also be dephosphorylated and inactivated by this protein. The chain is Protein phosphatase Slingshot homolog 1 from Homo sapiens (Human).